We begin with the raw amino-acid sequence, 201 residues long: Pectinesterase inhibitor 7 (201 aa).

The first 24 residues, 1–24 (MARNFELSLILFVLYLSTAAIVMA), serve as a signal peptide directing secretion. 2 disulfide bridges follow: C42–C51 and C108–C159.

It belongs to the PMEI family. In terms of assembly, binds reversibly to PME3 to inhibit its activity; the stability of the PME3-PMEI7 complex and the inhibition of the pectin methylesterase (PME) activity is pH-dependent, based on protonation status of amino-acids at the complex interface. In terms of tissue distribution, accumulates in etiolated hypocotyls (at protein level).

The protein resides in the secreted. It is found in the extracellular space. It localises to the apoplast. The protein localises to the cell wall. In terms of biological role, pectin methylesterase (PME) inhibitor that can target PME3 in a pH-dependent manner, mainly in slightly acidic conditions (pH 6.0 and 5.0) but not at pH 7.0; this processus relies on changes in the protonation of amino acids involved in intermolecular and intramolecular interactions. Regulates homogalacturonan methylesterification during plant development. The polypeptide is Pectinesterase inhibitor 7 (Arabidopsis thaliana (Mouse-ear cress)).